A 449-amino-acid chain; its full sequence is Methylenetetrahydrofolate--tRNA-(uracil-5-)-methyltransferase TrmFO (449 aa).

G10–G15 lines the FAD pocket.

Belongs to the MnmG family. TrmFO subfamily. Requires FAD as cofactor.

It is found in the cytoplasm. The catalysed reaction is uridine(54) in tRNA + (6R)-5,10-methylene-5,6,7,8-tetrahydrofolate + NADH + H(+) = 5-methyluridine(54) in tRNA + (6S)-5,6,7,8-tetrahydrofolate + NAD(+). It catalyses the reaction uridine(54) in tRNA + (6R)-5,10-methylene-5,6,7,8-tetrahydrofolate + NADPH + H(+) = 5-methyluridine(54) in tRNA + (6S)-5,6,7,8-tetrahydrofolate + NADP(+). Catalyzes the folate-dependent formation of 5-methyl-uridine at position 54 (M-5-U54) in all tRNAs. The chain is Methylenetetrahydrofolate--tRNA-(uracil-5-)-methyltransferase TrmFO from Sphingopyxis alaskensis (strain DSM 13593 / LMG 18877 / RB2256) (Sphingomonas alaskensis).